The following is a 260-amino-acid chain: Small ribosomal subunit protein bS6 (260 aa).

The protein belongs to the bacterial ribosomal protein bS6 family.

In terms of biological role, binds together with bS18 to 16S ribosomal RNA. The chain is Small ribosomal subunit protein bS6 from Wolbachia sp. subsp. Brugia malayi (strain TRS).